The chain runs to 174 residues: Ribosome maturation factor RimM (174 aa).

The PRC barrel domain maps to 96–169; sequence EPDTYYDHQL…ILEIDPPDGL (74 aa).

The protein belongs to the RimM family. As to quaternary structure, binds ribosomal protein uS19.

It localises to the cytoplasm. In terms of biological role, an accessory protein needed during the final step in the assembly of 30S ribosomal subunit, possibly for assembly of the head region. Essential for efficient processing of 16S rRNA. May be needed both before and after RbfA during the maturation of 16S rRNA. It has affinity for free ribosomal 30S subunits but not for 70S ribosomes. The protein is Ribosome maturation factor RimM of Mycobacterium marinum (strain ATCC BAA-535 / M).